The chain runs to 136 residues: uncharacterized protein (136 aa).

This is an uncharacterized protein from Ictaluridae (bullhead catfishes).